We begin with the raw amino-acid sequence, 399 residues long: MALQTASMLPASFSIPKEGKIGASLKDSTLFGVSSLSDSLKGDFTSSALRCKELRQKVGAVRAETAAPATPAVNKSSSEGKKTLRKGNVVITGASSGLGLATAKALAESGKWHVIMACRDYLKAARAAKSAGLAKENYTIMHLDLASLDSVRQFVDNFRRSEMPLDVLINNAAVYFPTAKEPSFTADGFEISVGTNHLGHFLLSRLLLEDLKKSDYPSKRLIIVGSITGNTNTLAGNVPPKANLGDLRGLAGGLTGLNSSAMIDGGDFDGAKAYKDSKVCNMLTMQEFHRRYHEETGITFASLYPGCIATTGLFREHIPLFRTLFPPFQKYITKGYVSEEESGKRLAQVVSDPSLTKSGVYWSWNNASASFENQLSQEASDAEKARKVWEVSEKLVGLA.

A chloroplast-targeting transit peptide spans 1–64 (MALQTASMLP…RQKVGAVRAE (64 aa)).

The protein belongs to the short-chain dehydrogenases/reductases (SDR) family. POR subfamily.

The protein localises to the plastid. Its subcellular location is the chloroplast. It catalyses the reaction chlorophyllide a + NADP(+) = protochlorophyllide a + NADPH + H(+). Its pathway is porphyrin-containing compound metabolism; chlorophyll biosynthesis. Its function is as follows. Phototransformation of protochlorophyllide (Pchlide) to chlorophyllide (Chlide). In Pisum sativum (Garden pea), this protein is Protochlorophyllide reductase, chloroplastic (3PCR).